The sequence spans 369 residues: Methionine import ATP-binding protein MetN (369 aa).

Residues 31–266 form the ABC transporter domain; that stretch reads VEMKDVRRMF…PQSPVTQSML (236 aa). 63 to 70 contributes to the ATP binding site; that stretch reads GRSGAGKS.

The protein belongs to the ABC transporter superfamily. Methionine importer (TC 3.A.1.24) family. As to quaternary structure, the complex is composed of two ATP-binding proteins (MetN), two transmembrane proteins (MetI) and a solute-binding protein (MetQ).

It localises to the cell inner membrane. The catalysed reaction is L-methionine(out) + ATP + H2O = L-methionine(in) + ADP + phosphate + H(+). The enzyme catalyses D-methionine(out) + ATP + H2O = D-methionine(in) + ADP + phosphate + H(+). Functionally, part of the ABC transporter complex MetNIQ involved in methionine import. Responsible for energy coupling to the transport system. The protein is Methionine import ATP-binding protein MetN of Brucella abortus (strain 2308).